The sequence spans 101 residues: Interleukin-8 (101 aa).

The signal sequence occupies residues 1–22 (MTSKLVVALLAAFMLSAALCEA). Arg-27 carries the citrulline modification. 2 cysteine pairs are disulfide-bonded: Cys-34/Cys-61 and Cys-36/Cys-77.

The protein belongs to the intercrine alpha (chemokine CxC) family. As to quaternary structure, homodimer. Interacts with TNFAIP6 (via Link domain); this interaction interferes with chemokine binding to glycosaminoglycans. Post-translationally, citrullination at Arg-27 prevents proteolysis, and dampens tissue inflammation, it also enhances leukocytosis, possibly through impaired chemokine clearance from the blood circulation.

The protein localises to the secreted. In terms of biological role, chemotactic factor that mediates inflammatory response by attracting neutrophils, basophils, and T-cells to clear pathogens and protect the host from infection. Also plays an important role in neutrophil activation. Released in response to an inflammatory stimulus, exerts its effect by binding to the G-protein-coupled receptors CXCR1 and CXCR2, primarily found in neutrophils, monocytes and endothelial cells. G-protein heterotrimer (alpha, beta, gamma subunits) constitutively binds to CXCR1/CXCR2 receptor and activation by IL8 leads to beta and gamma subunits release from Galpha (GNAI2 in neutrophils) and activation of several downstream signaling pathways including PI3K and MAPK pathways. In Felis catus (Cat), this protein is Interleukin-8 (CXCL8).